We begin with the raw amino-acid sequence, 57 residues long: Andropin (57 aa).

Positions 1–23 (MKYFVVLVVLALILAITVDPSDA) are cleaved as a signal peptide.

Belongs to the andropin family. Ejaculatory duct of adult males.

It is found in the secreted. Male-specific peptide with moderate activity against Gram-positive bacteria. In Drosophila sechellia (Fruit fly), this protein is Andropin (Anp).